We begin with the raw amino-acid sequence, 511 residues long: Maturase K (511 aa).

This sequence belongs to the intron maturase 2 family. MatK subfamily.

It localises to the plastid. It is found in the chloroplast. In terms of biological role, usually encoded in the trnK tRNA gene intron. Probably assists in splicing its own and other chloroplast group II introns. In Maihuenia poeppigii (Hardy cactus), this protein is Maturase K.